Consider the following 356-residue polypeptide: Probable D-xylulose reductase A (356 aa).

3 residues coordinate Zn(2+): cysteine 45, histidine 70, and glutamate 71. 180-185 (GAGPVG) is an NAD(+) binding site.

It belongs to the zinc-containing alcohol dehydrogenase family. The cofactor is Zn(2+).

The catalysed reaction is xylitol + NAD(+) = D-xylulose + NADH + H(+). The protein operates within carbohydrate degradation; L-arabinose degradation via L-arabinitol; D-xylulose 5-phosphate from L-arabinose (fungal route): step 4/5. Its function is as follows. Xylitol dehydrogenase which catalyzes the conversion of xylitol to D-xylulose. Xylose is a major component of hemicelluloses such as xylan. Most fungi utilize D-xylose via three enzymatic reactions, xylose reductase (XR), xylitol dehydrogenase (XDH), and xylulokinase, to form xylulose 5-phosphate, which enters pentose phosphate pathway. This chain is Probable D-xylulose reductase A (xdhA), found in Arthroderma otae (strain ATCC MYA-4605 / CBS 113480) (Microsporum canis).